The primary structure comprises 261 residues: Matrix metalloproteinase-26 (261 aa).

An N-terminal signal peptide occupies residues 1-17; sequence MQLVILRVTIFLPWCFA. The propeptide occupies 18-89; the sequence is VPVPPAADHK…PHCGVPDGSD (72 aa). An N-linked (GlcNAc...) asparagine glycan is attached at N64. Residues 80 to 87 carry the Cysteine switch motif; sequence PHCGVPDG. Positions 82 and 208 each coordinate Zn(2+). E209 is a catalytic residue. Zn(2+)-binding residues include H212 and H218. A glycan (N-linked (GlcNAc...) asparagine) is linked at N221.

This sequence belongs to the peptidase M10A family. It depends on Zn(2+) as a cofactor. Ca(2+) serves as cofactor. Expressed specifically in uterus and placenta. Is also widely expressed in malignant tumors from different sources as well as in diverse tumor cell lines.

Its subcellular location is the secreted. It localises to the extracellular space. The protein resides in the extracellular matrix. May hydrolyze collagen type IV, fibronectin, fibrinogen, beta-casein, type I gelatin and alpha-1 proteinase inhibitor. Is also able to activate progelatinase B. This Homo sapiens (Human) protein is Matrix metalloproteinase-26 (MMP26).